The following is a 221-amino-acid chain: Pectate lyase C (221 aa).

The first 28 residues, 1-28, serve as a signal peptide directing secretion; that stretch reads MKRLAGTVILSGLLVCGFGQALPEKALA.

Belongs to the polysaccharide lyase 3 family. Requires Ca(2+) as cofactor.

The protein localises to the secreted. It catalyses the reaction Eliminative cleavage of (1-&gt;4)-alpha-D-galacturonan to give oligosaccharides with 4-deoxy-alpha-D-galact-4-enuronosyl groups at their non-reducing ends.. The catalysed reaction is Eliminative cleavage of (1-&gt;4)-alpha-D-galacturonan methyl ester to give oligosaccharides with 4-deoxy-6-O-methyl-alpha-D-galact-4-enuronosyl groups at their non-reducing ends.. It functions in the pathway glycan metabolism; pectin degradation; 2-dehydro-3-deoxy-D-gluconate from pectin: step 2/5. Catalyzes the depolymerization of both polygalacturonate and pectins of methyl esterification degree from 22 to 89%, with an endo mode of action. In contrast to the majority of pectate lyases, displays high activity on highly methylated pectins. This chain is Pectate lyase C (pelC), found in Bacillus licheniformis (strain ATCC 14580 / DSM 13 / JCM 2505 / CCUG 7422 / NBRC 12200 / NCIMB 9375 / NCTC 10341 / NRRL NRS-1264 / Gibson 46).